A 472-amino-acid chain; its full sequence is Arabinose-proton symporter (472 aa).

At 1–29 (MVTINTESALTPRSLRDTRRMNMFVSVAA) the chain is on the cytoplasmic side. The helical transmembrane segment at 30-50 (AVAGLLFGLDIGVIAGALPFI) threads the bilayer. Over 51-63 (TDHFVLTSRLQEW) the chain is Periplasmic. Residues 64-84 (VVSSMMLGAAIGALFNGWLSF) traverse the membrane as a helical segment. Topologically, residues 85 to 91 (RLGRKYS) are cytoplasmic. A helical membrane pass occupies residues 92–112 (LMAGAILFVLGSIGSAFATSV). At 113 to 114 (EM) the chain is on the periplasmic side. Residues 115–135 (LIAARVVLGIAVGIASYTAPL) traverse the membrane as a helical segment. At 136–154 (YLSEMASENVRGKMISMYQ) the chain is on the cytoplasmic side. The chain crosses the membrane as a helical span at residues 155-175 (LMVTLGIVLAFLSDTAFSYSG). The Periplasmic portion of the chain corresponds to 176–178 (NWR). The chain crosses the membrane as a helical span at residues 179-199 (AMLGVLALPAVLLIILVVFLP). Residues 200 to 257 (NSPRWLAEKGRHIEAEEVLRMLRDTSEKAREELNEIRESLKLKQGGWALFKINRNVRR) lie on the Cytoplasmic side of the membrane. The chain crosses the membrane as a helical span at residues 258–278 (AVFLGMLLQAMQQFTGMNIIM). Residues 279 to 297 (YYAPRIFKMAGFTTTEQQM) are Periplasmic-facing. A helical transmembrane segment spans residues 298–318 (IATLVVGLTFMFATFIAVFTV). Residues 319-325 (DKAGRKP) lie on the Cytoplasmic side of the membrane. Residues 326–346 (ALKIGFSVMALGTLVLGYCLM) traverse the membrane as a helical segment. Topologically, residues 347–361 (QFDNGTASSGLSWLS) are periplasmic. The helical transmembrane segment at 362-382 (VGMTMMCIAGYAMSAAPVVWI) threads the bilayer. Residues 383–404 (LCSEIQPLKCRDFGITCSTTTN) are Cytoplasmic-facing. Transmembrane regions (helical) follow at residues 405 to 425 (WVSN…IGAA) and 426 to 446 (GTFW…FWLI). The Cytoplasmic portion of the chain corresponds to 447-472 (PETKNVTLEHIERKLMAGEKLRNIGV).

Belongs to the major facilitator superfamily. Sugar transporter (TC 2.A.1.1) family.

Its subcellular location is the cell inner membrane. It catalyses the reaction L-arabinose(in) + H(+)(in) = L-arabinose(out) + H(+)(out). Functionally, uptake of L-arabinose across the cytoplasmic membrane with the concomitant transport of protons into the cell (symport system). This is Arabinose-proton symporter (araE) from Escherichia coli O157:H7.